Reading from the N-terminus, the 361-residue chain is Cell cycle control protein 50A (361 aa).

The disordered stretch occupies residues 1 to 28 (MAMNYNAKDEVDGGPPCPPGGTAKTRRP). The residue at position 2 (Ala-2) is an N-acetylalanine. A required for ATPase and aminophospholipid flippase activity region spans residues 2–48 (AMNYNAKDEVDGGPPCPPGGTAKTRRPDNTAFKQQRLPAWQPILTAG). Over 2–49 (AMNYNAKDEVDGGPPCPPGGTAKTRRPDNTAFKQQRLPAWQPILTAGT) the chain is Cytoplasmic. The segment at 49 to 348 (TVLPTFFIIG…LGVVLLVINH (300 aa)) is interaction with ATP8A2. The helical transmembrane segment at 50–70 (VLPTFFIIGLIFIPIGIGIFV) threads the bilayer. Residues 71 to 325 (TSNNIREIEI…SWMGGKNPFL (255 aa)) are Exoplasmic loop-facing. Cystine bridges form between Cys-91–Cys-104, Cys-94–Cys-102, and Cys-157–Cys-171. 3 N-linked (GlcNAc...) asparagine glycosylation sites follow: Asn-180, Asn-190, and Asn-294. Residues 326 to 346 (GIAYITIGSISFLLGVVLLVI) traverse the membrane as a helical segment. Topologically, residues 347–361 (NHKYRNSSNTADITI) are cytoplasmic.

Belongs to the CDC50/LEM3 family. Component of various P4-ATPase flippase complexes which consists of a catalytic alpha subunit and an accessory beta subunit. Interacts with ATP8A1 to form a flippase complex; this complex forms an intermediate phosphoenzyme. Interacts with ATP8A2 to form a flippase complex. ATP8B1:TMEM30A and ATP8B2:TMEM30A flippase complexes have been shown to form intermediate phosphoenzymes in vitro. Interacts with alpha subunits ATP8A1, ATP8B1, ATP8B2, ATP8B4, ATP10A, ATP10B, ATP10D, ATP11A, ATP11B and ATP11C. Post-translationally, N-glycosylated; contributes to ATP8A2:TMEM30A flippase complex assembly but not to functional activity. In terms of tissue distribution, expressed in photoreceptor cells; detected in retina outer segment and other retinal layers (at protein level).

It is found in the membrane. The protein localises to the golgi apparatus. It localises to the cytoplasmic vesicle. The protein resides in the secretory vesicle membrane. Its subcellular location is the apical cell membrane. It is found in the photoreceptor inner segment. The protein localises to the cell projection. It localises to the cilium. The protein resides in the photoreceptor outer segment. Functionally, accessory component of a P4-ATPase flippase complex which catalyzes the hydrolysis of ATP coupled to the transport of aminophospholipids from the outer to the inner leaflet of various membranes and ensures the maintenance of asymmetric distribution of phospholipids. Phospholipid translocation also seems to be implicated in vesicle formation and in uptake of lipid signaling molecules. The beta subunit may assist in binding of the phospholipid substrate. Required for the proper folding, assembly and ER to Golgi exit of the ATP8A2:TMEM30A flippase complex. ATP8A2:TMEM30A may be involved in regulation of neurite outgrowth, and, reconstituted to liposomes, predomiminantly transports phosphatidylserine (PS) and to a lesser extent phosphatidylethanolamine (PE). The ATP8A1:TMEM30A flippase complex seems to play a role in regulation of cell migration probably involving flippase-mediated translocation of phosphatidylethanolamine (PE) at the plasma membrane. Required for the formation of the ATP8A2, ATP8B1 and ATP8B2 P-type ATPAse intermediate phosphoenzymes. Involved in uptake of platelet-activating factor (PAF). Can also mediate the export of alpha subunits ATP8A1, ATP8B1, ATP8B2, ATP8B4, ATP10A, ATP10B, ATP10D, ATP11A, ATP11B and ATP11C from the ER to other membrane localizations. This is Cell cycle control protein 50A from Bos taurus (Bovine).